Here is a 173-residue protein sequence, read N- to C-terminus: Co-chaperone protein HscB homolog (173 aa).

Residues N2 to L74 enclose the J domain.

It belongs to the HscB family. As to quaternary structure, interacts with HscA and stimulates its ATPase activity.

Its function is as follows. Co-chaperone involved in the maturation of iron-sulfur cluster-containing proteins. Seems to help targeting proteins to be folded toward HscA. The sequence is that of Co-chaperone protein HscB homolog from Shewanella loihica (strain ATCC BAA-1088 / PV-4).